The chain runs to 157 residues: Nucleoside diphosphate kinase (157 aa).

Positions 12, 60, 88, 94, and 105 each coordinate ATP. Residue His121 is the Pros-phosphohistidine intermediate of the active site.

Belongs to the NDK family. Requires Mg(2+) as cofactor.

It localises to the cytoplasm. The enzyme catalyses a 2'-deoxyribonucleoside 5'-diphosphate + ATP = a 2'-deoxyribonucleoside 5'-triphosphate + ADP. It catalyses the reaction a ribonucleoside 5'-diphosphate + ATP = a ribonucleoside 5'-triphosphate + ADP. Its function is as follows. Major role in the synthesis of nucleoside triphosphates other than ATP. The ATP gamma phosphate is transferred to the NDP beta phosphate via a ping-pong mechanism, using a phosphorylated active-site intermediate. The polypeptide is Nucleoside diphosphate kinase (Pyrococcus horikoshii (strain ATCC 700860 / DSM 12428 / JCM 9974 / NBRC 100139 / OT-3)).